We begin with the raw amino-acid sequence, 290 residues long: Zinc-finger homeodomain protein 2 (290 aa).

Positions 1–15 (MDFDDHDEGDGDEEM) are enriched in acidic residues. Residues 1 to 59 (MDFDDHDEGDGDEEMPPMPLSSGYDAPMQPGLGGGGGGVPKPGGGVGGGGGGGGGGGGG) are disordered. Positions 31–59 (GLGGGGGGVPKPGGGVGGGGGGGGGGGGG) are enriched in gly residues. The ZF-HD dimerization-type; degenerate zinc-finger motif lies at 63–112 (YRECLKNHAVGIGGHAVDGCGEFMASGEEGSIDALRCAACGCHRNFHRKE). Residues 226-289 (KKRFRTKFTQ…NNKHTLGKKA (64 aa)) constitute a DNA-binding region (homeobox).

In terms of assembly, homo- and heterodimer with other ZFHD proteins.

The protein localises to the nucleus. In terms of biological role, putative transcription factor. The protein is Zinc-finger homeodomain protein 2 (ZHD2) of Oryza sativa subsp. japonica (Rice).